The primary structure comprises 320 residues: SUMO-activating enzyme subunit 1B-1 (320 aa).

Residue methionine 1 is modified to N-acetylmethionine.

Belongs to the ubiquitin-activating E1 family. Heterodimer of SAE1A or SAE1B and SAE2. The complex binds SUMO proteins via SAE2.

It localises to the nucleus. The protein operates within protein modification; protein sumoylation. Functionally, the dimeric enzyme acts as an E1 ligase for SUMO1 and SUMO2. It mediates ATP-dependent activation of SUMO proteins and formation of a thioester with a conserved cysteine residue on SAE2. Functionally redundant with its paralog SAE1A. This is SUMO-activating enzyme subunit 1B-1 (SAE1B-1) from Arabidopsis thaliana (Mouse-ear cress).